Reading from the N-terminus, the 308-residue chain is Ribonuclease HIII (308 aa).

The RNase H type-2 domain occupies phenylalanine 88–glutamine 304. A divalent metal cation contacts are provided by aspartate 94, glutamate 95, and aspartate 199.

Belongs to the RNase HII family. RnhC subfamily. Requires Mn(2+) as cofactor. Mg(2+) is required as a cofactor.

It is found in the cytoplasm. It carries out the reaction Endonucleolytic cleavage to 5'-phosphomonoester.. Endonuclease that specifically degrades the RNA of RNA-DNA hybrids. The polypeptide is Ribonuclease HIII (Staphylococcus epidermidis (strain ATCC 35984 / DSM 28319 / BCRC 17069 / CCUG 31568 / BM 3577 / RP62A)).